The sequence spans 262 residues: Elongator complex protein 5 (262 aa).

Disordered stretches follow at residues 181 to 214 (TPLD…FKIE) and 229 to 262 (PYER…DLCI). Residues 200–211 (AEQTTEPASSTF) show a composition bias toward polar residues. Residues 246–262 (DADDDFDEEDPDEDLCI) show a composition bias toward acidic residues.

It belongs to the ELP5 family. Component of the elongator complex composed of Elp1, Elp2, Elp3, Elp4, Elp5 and Elp6. The elongator complex associates with and stabilizes microtubules; efficient interaction requires the full complex.

It is found in the cytoplasm. The protein localises to the nucleus. The protein resides in the cytoskeleton. It localises to the spindle. Its pathway is tRNA modification; 5-methoxycarbonylmethyl-2-thiouridine-tRNA biosynthesis. Its function is as follows. Component of the elongator complex, which is required for multiple tRNA modifications, including mcm5U (5-methoxycarbonylmethyl uridine), mcm5s2U (5-methoxycarbonylmethyl-2-thiouridine), and ncm5U (5-carbamoylmethyl uridine). The elongator complex catalyzes the formation of carboxymethyluridine in the wobble base at position 34 in tRNAs. Binding by the elongator complex stabilizes microtubules and promotes their growth. This induces central spindle asymmetry, promoting polarized signaling endosome trafficking during asymmetric cell division and cell fate assignation of sensory organ precursor cells. The sequence is that of Elongator complex protein 5 from Drosophila melanogaster (Fruit fly).